A 690-amino-acid polypeptide reads, in one-letter code: Methionine--tRNA ligase (690 aa).

The 'HIGH' region motif lies at 12–22; that stretch reads PYANGSIHLGH. Zn(2+) is bound by residues Cys-143, Cys-146, Cys-156, and Cys-159. The short motif at 328–332 is the 'KMSKS' region element; it reads KMSKS. Residue Lys-331 participates in ATP binding. The tRNA-binding domain maps to 582-690; the sequence is DFAKVDLRIA…SGAEPGMKVK (109 aa).

Belongs to the class-I aminoacyl-tRNA synthetase family. MetG type 1 subfamily. In terms of assembly, homodimer. The cofactor is Zn(2+).

It is found in the cytoplasm. It carries out the reaction tRNA(Met) + L-methionine + ATP = L-methionyl-tRNA(Met) + AMP + diphosphate. Functionally, is required not only for elongation of protein synthesis but also for the initiation of all mRNA translation through initiator tRNA(fMet) aminoacylation. The polypeptide is Methionine--tRNA ligase (Thiobacillus denitrificans (strain ATCC 25259 / T1)).